The following is a 156-amino-acid chain: Transcription elongation factor GreA (156 aa).

Residues 1 to 32 (MKKVRLTREGYEKLKQELEELKRKFMYEISER) adopt a coiled-coil conformation.

This sequence belongs to the GreA/GreB family.

Functionally, necessary for efficient RNA polymerase transcription elongation past template-encoded arresting sites. The arresting sites in DNA have the property of trapping a certain fraction of elongating RNA polymerases that pass through, resulting in locked ternary complexes. Cleavage of the nascent transcript by cleavage factors such as GreA or GreB allows the resumption of elongation from the new 3'terminus. GreA releases sequences of 2 to 3 nucleotides. The polypeptide is Transcription elongation factor GreA (Thermotoga neapolitana (strain ATCC 49049 / DSM 4359 / NBRC 107923 / NS-E)).